Consider the following 220-residue polypeptide: MFLGTLYSFKTNTRTVCLLELAKLLDLQVDLVETYPHKFSADLAAKFPLQKLPVFIGADGFELSEVIAIVKYFYEKGKHNDKEGLGPVNEVEEAEMLKWMCFINFDIVTPQNVRPWVGMFRGNIPYEEKPFKESATRAIDSLKIPNELVKDRTYLVGDRFTLADLFFGSLLRIFFNSIIDEKTRKELPHLTRYYITMFHQAKLETYFPLELPLTVTVAKK.

In terms of domain architecture, GST N-terminal spans Phe-2 to Asp-81. Positions Asn-89–Thr-216 constitute a GST C-terminal domain.

This sequence belongs to the GST superfamily.

Its subcellular location is the cytoplasm. It carries out the reaction RX + glutathione = an S-substituted glutathione + a halide anion + H(+). Its function is as follows. Involved in the oxidative stress response and detoxification. This is Putative glutathione S-transferase C1183.02 from Schizosaccharomyces pombe (strain 972 / ATCC 24843) (Fission yeast).